Here is a 150-residue protein sequence, read N- to C-terminus: Transthyretin (150 aa).

The N-terminal stretch at 1 to 20 (MASYRLLLLCLAGLVFVSEA) is a signal peptide. Sulfocysteine is present on C30. K35 contacts L-thyroxine. E62 bears the 4-carboxyglutamate mark. E74 contributes to the L-thyroxine binding site. N118 carries an N-linked (GlcNAc...) asparagine glycan. S137 provides a ligand contact to L-thyroxine.

This sequence belongs to the transthyretin family. Homotetramer. Dimer of dimers. In the homotetramer, subunits assemble around a central channel that can accommodate two ligand molecules. Interacts with RBP4. In terms of processing, sulfonation of the reactive cysteine Cys-30 enhances the stability of the native conformation of TTR, avoiding misassembly of the protein leading to amyloid formation. As to expression, detected in plasma and cerebrospinal fluid (at protein level). Highly expressed in the choroid plexus. Detected in liver.

The protein localises to the secreted. Functionally, thyroid hormone-binding protein. Probably transports thyroxine from the bloodstream to the brain. The chain is Transthyretin (TTR) from Sus scrofa (Pig).